The sequence spans 152 residues: Putative pre-16S rRNA nuclease (152 aa).

This sequence belongs to the YqgF nuclease family.

The protein resides in the cytoplasm. Functionally, could be a nuclease involved in processing of the 5'-end of pre-16S rRNA. The polypeptide is Putative pre-16S rRNA nuclease (Bifidobacterium longum (strain DJO10A)).